The primary structure comprises 175 residues: uncharacterized protein (175 aa).

The Extracellular portion of the chain corresponds to 1–2 (ME). The helical transmembrane segment at 3 to 23 (SIILSIAIFIGVLLGTSVGAG) threads the bilayer. The Cytoplasmic segment spans residues 24 to 151 (SGSSISPDVD…TGISTTMNAR (128 aa)). A disordered region spans residues 26–88 (SSISPDVDAG…DVGAGSGSSI (63 aa)). Residues 59-78 (FSGSSTSPDVDAGSGSSTSP) show a composition bias toward polar residues. A helical transmembrane segment spans residues 152 to 172 (VAVLITAAILSAPVTAIALLE). The Extracellular portion of the chain corresponds to 173–175 (ARR).

The protein localises to the membrane. This is an uncharacterized protein from Saccharomyces cerevisiae (strain ATCC 204508 / S288c) (Baker's yeast).